The following is a 117-amino-acid chain: Neurotoxic enhancer CSTX-13 (117 aa).

The signal sequence occupies residues 1–20; the sequence is MKVLVIFAVLSLVIFSNCSA. Positions 21-47 are excised as a propeptide; sequence ETDEDFFGEESFEADDIIPFIAKEQVR. Cystine bridges form between cysteine 50/cysteine 65, cysteine 57/cysteine 74, cysteine 64/cysteine 95, and cysteine 76/cysteine 93. Positions 82-87 are excised as a propeptide; that stretch reads RSETAR. The residue at position 116 (threonine 116) is a Threonine amide.

Belongs to the neurotoxin 19 (CSTX) family. 12 subfamily. In terms of assembly, heterodimer of A and B chains; disulfide-linked. Interacts with CSTX-1 (AC P81694) (Kd=430 nM), and with CSTX-9 (AC P58604) (Kd=370 nM). As to expression, expressed by the venom gland.

It is found in the secreted. The protein resides in the target cell membrane. Synergistic toxin that induces or increases a cytolytic effect when combined with CSTX-1 (AC P81694) or CSTX-9 (AC P58604). When alone, has a weak insecticidal activity, with an unknown molecular target. This chain is Neurotoxic enhancer CSTX-13, found in Cupiennius salei (American wandering spider).